The sequence spans 173 residues: ATP synthase subunit b (173 aa).

The helical transmembrane segment at 15–35 (LYVGDMLFYAILFIVLMALIA) threads the bilayer.

Belongs to the ATPase B chain family. In terms of assembly, F-type ATPases have 2 components, F(1) - the catalytic core - and F(0) - the membrane proton channel. F(1) has five subunits: alpha(3), beta(3), gamma(1), delta(1), epsilon(1). F(0) has three main subunits: a(1), b(2) and c(10-14). The alpha and beta chains form an alternating ring which encloses part of the gamma chain. F(1) is attached to F(0) by a central stalk formed by the gamma and epsilon chains, while a peripheral stalk is formed by the delta and b chains.

Its subcellular location is the cell membrane. F(1)F(0) ATP synthase produces ATP from ADP in the presence of a proton or sodium gradient. F-type ATPases consist of two structural domains, F(1) containing the extramembraneous catalytic core and F(0) containing the membrane proton channel, linked together by a central stalk and a peripheral stalk. During catalysis, ATP synthesis in the catalytic domain of F(1) is coupled via a rotary mechanism of the central stalk subunits to proton translocation. Functionally, component of the F(0) channel, it forms part of the peripheral stalk, linking F(1) to F(0). The sequence is that of ATP synthase subunit b from Pediococcus pentosaceus (strain ATCC 25745 / CCUG 21536 / LMG 10740 / 183-1w).